A 1132-amino-acid polypeptide reads, in one-letter code: MSHAPRYAELRCKSCFSFLEGASHPEELVGRAAELGLSGLALADVNGLYGIVRAHAEAKRQGLPLIVGAELVVAGLAPGRPARLVLLAQDREGYAGLCRLVTRAHCGEGWTGAPPRRERDAVAVPFEAVAAGARGLFALYPGADGDAVARLKDAFGRRAALAVARHRVAGEEARVLAARSAGRRLGVPVAVTNDVHTHARARQVLQDVLTCVRHGTTVDRAGRRLFPNAERTLKGPEELARLWSDFPEGLAAAADIADQCRFRMEEIRGEHPLPPVVVERGGLAGGVEVATSSPAQAARDGARSTTPSLRLRASLPAEPPAAPAPEAPAAAAAPGLAASAASVAADTGADRDGALAGMALLRELVREGARWRYGGEPPEDVARQLARELDLVESLGYASYFLTVWDVVRFARSRGILCQGRGSAANSAVCYVLGITSIDPVRMGLLFERFISAERGEPPDIDVDFEHERREEVLQYVYQRYGRDRAGMVCEVITYRGKSALRDVGKALGLSLGQVDRLAKLVGSYEDLGQVGPELLAQAGLDAADSERVRMTLALARELQGFPRHLSIHVGGFVITRRPLCETVPIEPAAMPGRTIVQWDKDDLAELDLLKVDLLGLGMLTALSRALALLARHRPAPASPTPVPHPDALATIPAEDPEVYEMLGRADSIGVFQVESRAQMSLAPRLRPRNFYDLVISVAIIRPGPIQGGMIHPYLRRRDGKEQVRYPYAPLEPVLARTLGVPLFQEQAMRLAVIAAGFTPGEADELRRVMTHRRSHEKLAAMKARLVAGMAERGISGADAEEIFKQLLGFAGYGFPESHAASFALLVYASAWLKRYHPAAFACALLNSQPMGFYAPHTLVEDAKRHGVEVRGVDVGCSGWESSLEGAAPGRPAAPGEAAVLRVGLHAIRGLPRAVGEAILEARAAGPFGSVAELVRRARLSRAWLVRLAEAGALGTLAPDRRGAVWRSLAVEADGGDLFAGLAPPEPEAALPEASAADEVSADFTTTGLSVRGHPMALVRPGLGGDRIRTARELGRLPDRAPVEVAGLVIVRQRPETARGIVFVSLEDETGIANLVVMPDVYERFRPVVRGAPFLLARGRVERSGKVVNVRVDSVAPLALAPSMDARARDFH.

It belongs to the DNA polymerase type-C family. DnaE2 subfamily.

The protein localises to the cytoplasm. The catalysed reaction is DNA(n) + a 2'-deoxyribonucleoside 5'-triphosphate = DNA(n+1) + diphosphate. Functionally, DNA polymerase involved in damage-induced mutagenesis and translesion synthesis (TLS). It is not the major replicative DNA polymerase. The protein is Error-prone DNA polymerase of Anaeromyxobacter dehalogenans (strain 2CP-C).